The sequence spans 37 residues: Large ribosomal subunit protein bL36 (37 aa).

The protein belongs to the bacterial ribosomal protein bL36 family.

The polypeptide is Large ribosomal subunit protein bL36 (Shewanella frigidimarina (strain NCIMB 400)).